Reading from the N-terminus, the 260-residue chain is Thiazole synthase (260 aa).

Lys-96 acts as the Schiff-base intermediate with DXP in catalysis. 1-deoxy-D-xylulose 5-phosphate is bound by residues Gly-157, 183 to 184 (AG), and 205 to 206 (AS).

The protein belongs to the ThiG family. Homotetramer. Forms heterodimers with either ThiH or ThiS.

The protein resides in the cytoplasm. It carries out the reaction [ThiS sulfur-carrier protein]-C-terminal-Gly-aminoethanethioate + 2-iminoacetate + 1-deoxy-D-xylulose 5-phosphate = [ThiS sulfur-carrier protein]-C-terminal Gly-Gly + 2-[(2R,5Z)-2-carboxy-4-methylthiazol-5(2H)-ylidene]ethyl phosphate + 2 H2O + H(+). It participates in cofactor biosynthesis; thiamine diphosphate biosynthesis. Catalyzes the rearrangement of 1-deoxy-D-xylulose 5-phosphate (DXP) to produce the thiazole phosphate moiety of thiamine. Sulfur is provided by the thiocarboxylate moiety of the carrier protein ThiS. In vitro, sulfur can be provided by H(2)S. In Corynebacterium glutamicum (strain ATCC 13032 / DSM 20300 / JCM 1318 / BCRC 11384 / CCUG 27702 / LMG 3730 / NBRC 12168 / NCIMB 10025 / NRRL B-2784 / 534), this protein is Thiazole synthase.